A 220-amino-acid polypeptide reads, in one-letter code: Outer membrane protein assembly factor BamD (220 aa).

Residues 1–22 (MRLKHFKTFLFITMAIIVIGTG) form the signal peptide. A lipid anchor (N-palmitoyl cysteine) is attached at Cys23. Cys23 carries S-diacylglycerol cysteine lipidation.

This sequence belongs to the BamD family. Part of the Bam complex.

It localises to the cell outer membrane. In terms of biological role, part of the outer membrane protein assembly complex, which is involved in assembly and insertion of beta-barrel proteins into the outer membrane. The sequence is that of Outer membrane protein assembly factor BamD from Helicobacter pylori (strain ATCC 700392 / 26695) (Campylobacter pylori).